The sequence spans 89 residues: Small ribosomal subunit protein uS15 (89 aa).

It belongs to the universal ribosomal protein uS15 family. Part of the 30S ribosomal subunit. Forms a bridge to the 50S subunit in the 70S ribosome, contacting the 23S rRNA.

Functionally, one of the primary rRNA binding proteins, it binds directly to 16S rRNA where it helps nucleate assembly of the platform of the 30S subunit by binding and bridging several RNA helices of the 16S rRNA. Forms an intersubunit bridge (bridge B4) with the 23S rRNA of the 50S subunit in the ribosome. This is Small ribosomal subunit protein uS15 from Marinobacter nauticus (strain ATCC 700491 / DSM 11845 / VT8) (Marinobacter aquaeolei).